The following is a 360-amino-acid chain: Lipid-A-disaccharide synthase (360 aa).

The protein belongs to the LpxB family.

The catalysed reaction is a lipid X + a UDP-2-N,3-O-bis[(3R)-3-hydroxyacyl]-alpha-D-glucosamine = a lipid A disaccharide + UDP + H(+). Its pathway is bacterial outer membrane biogenesis; LPS lipid A biosynthesis. Functionally, condensation of UDP-2,3-diacylglucosamine and 2,3-diacylglucosamine-1-phosphate to form lipid A disaccharide, a precursor of lipid A, a phosphorylated glycolipid that anchors the lipopolysaccharide to the outer membrane of the cell. This Helicobacter pylori (strain P12) protein is Lipid-A-disaccharide synthase.